Reading from the N-terminus, the 578-residue chain is Adhesion G protein-coupled receptor A1 (578 aa).

Residues Met-1–Pro-22 are Extracellular-facing. Residues Val-23–Ile-43 traverse the membrane as a helical segment. Over Leu-44–Arg-56 the chain is Cytoplasmic. A helical membrane pass occupies residues His-57–Ile-77. The Extracellular portion of the chain corresponds to Asn-78–Gln-87. A helical transmembrane segment spans residues Ala-88–Ala-108. Over Arg-109 to Arg-137 the chain is Cytoplasmic. Residues Phe-138–Ile-158 form a helical membrane-spanning segment. Over Arg-159–Ser-178 the chain is Extracellular. Residues Leu-179–Cys-199 form a helical membrane-spanning segment. The Cytoplasmic portion of the chain corresponds to Thr-200–Arg-262. Positions Glu-216–Arg-236 are disordered. A helical membrane pass occupies residues Ala-263–Ser-283. Topologically, residues Gln-284–Asp-289 are extracellular. A helical membrane pass occupies residues Met-290–His-310. Disordered stretches follow at residues Pro-463 to Met-486 and Ser-537 to Val-578. The span at Ser-469 to Ser-481 shows a compositional bias: low complexity. Over residues Ser-537–Leu-548 the composition is skewed to polar residues.

It belongs to the G-protein coupled receptor 2 family. Adhesion G-protein coupled receptor (ADGR) subfamily. Predominantly expressed in CNS.

Its subcellular location is the membrane. The polypeptide is Adhesion G protein-coupled receptor A1 (Mus musculus (Mouse)).